Here is a 340-residue protein sequence, read N- to C-terminus: 3-hydroxybenzoate synthase (340 aa).

Residues Tyr-147, Arg-154, Tyr-207, and Arg-220 each contribute to the substrate site. Glu-334 (proton acceptor) is an active-site residue.

This sequence belongs to the FkbO/Hyg5 family. Trimer.

The enzyme catalyses chorismate = 3-hydroxybenzoate + pyruvate. Its function is as follows. Involved in the biosynthesis of BC325, a rapamycin analog containing a 3-hydroxybenzoate starter unit. Catalyzes the hydrolysis of chorismate via an intramolecular mechanism to yield 3-hydroxybenzoate (3HBA). In Streptomyces hygroscopicus, this protein is 3-hydroxybenzoate synthase.